The chain runs to 335 residues: Ferrochelatase (335 aa).

Fe cation contacts are provided by histidine 207 and glutamate 288.

This sequence belongs to the ferrochelatase family.

It localises to the cytoplasm. The catalysed reaction is heme b + 2 H(+) = protoporphyrin IX + Fe(2+). Its pathway is porphyrin-containing compound metabolism; protoheme biosynthesis; protoheme from protoporphyrin-IX: step 1/1. Its function is as follows. Catalyzes the ferrous insertion into protoporphyrin IX. This is Ferrochelatase from Helicobacter pylori (strain J99 / ATCC 700824) (Campylobacter pylori J99).